Reading from the N-terminus, the 114-residue chain is VEQKEIGRTYRYVAQELELKMEPVDPKQYVPRFASELELSEEVQSKANEIIDTTAEQGLLSGKSPTGYAAAAIYAASLLCNEKKTQREVADVAQVTEVTIRNRYQEQIEAMGIH.

Repeat copies occupy residues 1-17 (VEQKEIGRTYRYVAQEL) and 28-109 (QYVP…EQIE).

This sequence belongs to the TFIIB family.

Stabilizes TBP binding to an archaeal box-A promoter. Also responsible for recruiting RNA polymerase II to the pre-initiation complex (DNA-TBP-TFIIB). The chain is Transcription initiation factor IIB (tfb) from Haloarcula vallismortis (Halobacterium vallismortis).